We begin with the raw amino-acid sequence, 197 residues long: Sodium/potassium-transporting ATPase subunit beta-1-interacting protein 3 (197 aa).

The next 4 membrane-spanning stretches (helical) occupy residues 2–22, 35–55, 62–82, and 152–172; these read GCCT…VSAL, APIL…FGTI, IMVY…IICF, and VQIL…SISM.

It belongs to the NKAIN family. In terms of assembly, interacts with ATP1B1.

The protein resides in the cell membrane. This Homo sapiens (Human) protein is Sodium/potassium-transporting ATPase subunit beta-1-interacting protein 3 (NKAIN3).